The chain runs to 123 residues: WAP four-disulfide core domain protein 5 (123 aa).

The first 24 residues, 1–24, serve as a signal peptide directing secretion; sequence MRIQSLLLLGVLLAVGSQLPAAFG. 2 consecutive WAP domains span residues 27 to 73 and 74 to 121; these read KGEK…CVPR and ISVK…RDPA. 8 cysteine pairs are disulfide-bonded: Cys-34–Cys-62, Cys-41–Cys-66, Cys-49–Cys-61, Cys-55–Cys-70, Cys-81–Cys-109, Cys-88–Cys-113, Cys-96–Cys-108, and Cys-102–Cys-117.

It is found in the secreted. In terms of biological role, putative acid-stable proteinase inhibitor. The chain is WAP four-disulfide core domain protein 5 (WFDC5) from Callithrix jacchus (White-tufted-ear marmoset).